Here is an 821-residue protein sequence, read N- to C-terminus: Cell wall integrity transcriptional regulator CAS5 (821 aa).

Disordered stretches follow at residues histidine 42–histidine 66, phenylalanine 219–proline 245, threonine 305–glutamine 432, glutamine 544–leucine 576, and valine 607–cysteine 750. Positions proline 222 to proline 245 are enriched in polar residues. The span at threonine 305–asparagine 318 shows a compositional bias: low complexity. Residues proline 319 to serine 329 show a composition bias toward polar residues. Over residues glutamine 372–lysine 387 the composition is skewed to basic residues. Low complexity predominate over residues glutamine 396–glutamine 412. The segment covering glutamine 422–glutamine 432 has biased composition (polar residues). A compositionally biased stretch (acidic residues) spans glutamate 545–glutamate 561. 2 stretches are compositionally biased toward low complexity: residues leucine 662 to threonine 674 and lysine 684 to aspartate 693. The segment covering asparagine 694–glycine 714 has biased composition (acidic residues). 2 C2H2-type zinc fingers span residues histidine 748 to histidine 770 and phenylalanine 776 to histidine 801. The residue at position 769 (serine 769) is a Phosphoserine.

In terms of processing, phosphorylation at Ser-769 and probably additional serine residues. GLC7 dephosphorylates CAS5 in response to cell wall stress which leads to its translocation to the nucleus.

The protein resides in the nucleus. Its subcellular location is the cytoplasm. Its function is as follows. Transcription factor that acts with ADA2 to promote cell wall integrity. Regulates the expression of target genes in concert with the transcriptional regulators SWI4 and SWI6. Crucial for proper cell cycle dynamics and responses to echinocandins, which inhibit beta-1,3-glucan synthesis. Has distinct transcriptional targets under basal and stress conditions. Also regulates a transcriptional network that influences the response to fluconazole. Plays a key role in adherence, hyphal development, and virulence. Acts as a repressor of hypha-specific genes during yeast-form growth. This is Cell wall integrity transcriptional regulator CAS5 from Candida albicans (strain SC5314 / ATCC MYA-2876) (Yeast).